The following is a 50-amino-acid chain: Cuticle protein CP498 (50 aa).

2 tandem repeats follow at residues A6–L23 and I30–Y47.

Calcified shell.

This is Cuticle protein CP498 from Cancer pagurus (Rock crab).